Here is an 89-residue protein sequence, read N- to C-terminus: UPF0237 protein CA_C0478 (89 aa).

In terms of domain architecture, ACT spans 4 to 78 (IITVIGKDKV…KKLGVSIKIQ (75 aa)).

This sequence belongs to the UPF0237 family.

The protein is UPF0237 protein CA_C0478 of Clostridium acetobutylicum (strain ATCC 824 / DSM 792 / JCM 1419 / IAM 19013 / LMG 5710 / NBRC 13948 / NRRL B-527 / VKM B-1787 / 2291 / W).